The sequence spans 897 residues: 4-hydroxyphenylacetate decarboxylase glycyl radical subunit (897 aa).

In terms of domain architecture, PFL spans E35–L770. 4-hydroxyphenylacetate-binding residues include S344 and C503. C503 serves as the catalytic Cysteine radical intermediate. The active-site Proton donor is the E505. 4-hydroxyphenylacetate contacts are provided by H536 and E637. Positions G778 to K897 constitute a Glycine radical domain. At G873 the chain carries Glycine radical.

This sequence belongs to the glycyl radical enzyme (GRE) family. HPAD subfamily. In terms of assembly, heterooctamer consisting of 4 large (HpdB) subunits and 4 small (HpdC) subunits, arranged as a tetramer of heterodimers. Also forms a catalytically inactive homodimer. Post-translationally, requires the activating protein CsdA to generate the key active site glycyl radical that is involved in catalysis. Phosphorylated on serine. Phosphorylation may trigger the formation of the active heterooctamers and thereby regulates enzyme activity.

The enzyme catalyses 4-hydroxyphenylacetate + H(+) = 4-methylphenol + CO2. It carries out the reaction 3,4-dihydroxyphenylacetate + H(+) = 4-methylcatechol + CO2. Functionally, glycyl radical subunit of the HPA decarboxylase that decarboxylates phenylacetates with a hydroxyl group in the p-position. Active toward 4-hydroxyphenylacetate and 3,4-dihydroxyphenylacetate, forming 4-methylphenol and 4-methylcatechol, respectively. Is likely involved in the catabolism of aromatic amino acids such as tyrosine fermentation. 4-methylphenol (p-cresol) formation provides metabolic toxicity, which allows an active suppression of other microbes and may provide growth advantages for the producers in highly competitive environments. The large subunit is the catalytic subunit that binds the substrate. The chain is 4-hydroxyphenylacetate decarboxylase glycyl radical subunit from Clostridium scatologenes.